Reading from the N-terminus, the 360-residue chain is Heme A synthase (360 aa).

Transmembrane regions (helical) follow at residues 29-49 (WLFA…ATRL), 111-131 (FLGR…WWTG), 139-159 (LGLL…WIMV), 175-195 (LAAH…LAAG), 210-230 (LTAL…GLVA), 242-262 (PLMD…TPWI), 269-289 (VALV…VAAL), 309-329 (AILG…LLAV), and 330-350 (PLWA…MAAV). His276 contacts heme. A heme-binding site is contributed by His337.

The protein belongs to the COX15/CtaA family. Type 2 subfamily. As to quaternary structure, interacts with CtaB. Requires heme b as cofactor.

It localises to the cell membrane. The catalysed reaction is Fe(II)-heme o + 2 A + H2O = Fe(II)-heme a + 2 AH2. It participates in porphyrin-containing compound metabolism; heme A biosynthesis; heme A from heme O: step 1/1. Catalyzes the conversion of heme O to heme A by two successive hydroxylations of the methyl group at C8. The first hydroxylation forms heme I, the second hydroxylation results in an unstable dihydroxymethyl group, which spontaneously dehydrates, resulting in the formyl group of heme A. The chain is Heme A synthase from Methylobacterium nodulans (strain LMG 21967 / CNCM I-2342 / ORS 2060).